Consider the following 115-residue polypeptide: uncharacterized protein (115 aa).

The N-terminal stretch at 1-20 (MKTFFRTVLFGSLMAVCANS) is a signal peptide.

This is an uncharacterized protein from Escherichia coli O6:H1 (strain CFT073 / ATCC 700928 / UPEC).